A 269-amino-acid chain; its full sequence is MKITSISVQQKNKERYNIFIDEKYNFSVDEEVLARYQLMKGKALTEAEIEEIKQADMVRKGLNKAINFLSHRVRSEKEIRDYLKKQEMEAFAIDEILKKLADMDYINDLEFAELYTKTQIKTTLKGPRTIERELVEKGLTREIISQVIEEYSDEAQLENATKQAIKIMKRNNKSAKKMLQQKIITDLIQKGYTSELAKTAATEATSEIDIADEADILQKQVEKTMRKNKRYKPSIAKQKTITSLMQKGFSYDTIQSYLTENEISFEEEE.

This sequence belongs to the RecX family.

The protein resides in the cytoplasm. In terms of biological role, modulates RecA activity. In Listeria monocytogenes serotype 4a (strain HCC23), this protein is Regulatory protein RecX.